A 347-amino-acid chain; its full sequence is uncharacterized protein (347 aa).

5 disordered regions span residues 1–40 (MAQELAAPLSCGQPPGQNITETTTDPWDEGDLRFEPSNSM), 72–92 (SCEDSSSEGPSMHFVPPIQGS), 133–158 (SDSTTNCDLSGDNKDKHPKEKTQLTL), 173–209 (ENQKDDKDDDSVFPESAQEEDSQLPSSSLPGMAQVSH), and 306–347 (EDPR…PPDF). A compositionally biased stretch (polar residues) spans 15–25 (PGQNITETTTD). A compositionally biased stretch (basic and acidic residues) spans 143–154 (GDNKDKHPKEKT). Positions 179–194 (KDDDSVFPESAQEEDS) are enriched in acidic residues. The segment covering 195–209 (QLPSSSLPGMAQVSH) has biased composition (polar residues). The segment covering 306–318 (EDPREANERPREL) has biased composition (basic and acidic residues). A compositionally biased stretch (basic residues) spans 319–330 (ARKKRFSYRSKR).

This is an uncharacterized protein from Bos taurus (Bovine).